Consider the following 1793-residue polypeptide: Protein TIC 214 (1793 aa).

A run of 6 helical transmembrane segments spans residues 11 to 31 (LVSL…YYGF), 64 to 84 (FITG…HIAL), 90 to 112 (ITVI…NFLN), 129 to 149 (IFFQ…SSIL), 172 to 192 (VGWL…LVWI), and 222 to 242 (IFLI…PPIY). Residues 1504–1524 (DIEEDYGESDSKKGGKDKNKK) are disordered.

It belongs to the TIC214 family. In terms of assembly, part of the Tic complex.

The protein localises to the plastid. Its subcellular location is the chloroplast inner membrane. Its function is as follows. Involved in protein precursor import into chloroplasts. May be part of an intermediate translocation complex acting as a protein-conducting channel at the inner envelope. The polypeptide is Protein TIC 214 (Lotus japonicus (Lotus corniculatus var. japonicus)).